Reading from the N-terminus, the 184-residue chain is Tumor necrosis factor alpha-induced protein 8-like protein 2 (184 aa).

Position 3 is a phosphoserine (S3).

The protein belongs to the TNFAIP8 family. TNFAIP8L2 subfamily. May interact with CASP8; however, such result is unclear since could not reproduce the interaction with CASP8. Interacts with RAC1. Phosphorylated by TAK1/MAP3K7; this phosphorylation triggers association with BTRC and subsequent ubiquitination and degradation. In terms of processing, ubiquitinated in a BTRC-depdent manner; leading to degradation mediated through the proteasome pathway. In terms of tissue distribution, expressed in thymus, spleen, lymph node and small intestine, but not in liver, heart, muscle, testis, spinal cord or brain. Up-regulated in the spinal cord of mice with experimental autoimmune encephalomyelitis. Constitutively expressed by macrophages, B and T-lymphocytes at various developmental stages.

Its subcellular location is the cytoplasm. The protein localises to the nucleus. It localises to the lysosome. Functionally, acts as a negative regulator of innate and adaptive immunity by maintaining immune homeostasis. Plays a regulatory role in the Toll-like signaling pathway by determining the strength of LPS-induced signaling and gene expression. Inhibits TCR-mediated T-cell activation and negatively regulate T-cell function to prevent hyperresponsiveness. Also inhibits autolysosome formation via negatively modulating MTOR activation by interacting with RAC1 and promoting the disassociation of the RAC1-MTOR complex. Plays an essential role in NK-cell biology by acting as a checkpoint and displaying an expression pattern correlating with NK-cell maturation process and by negatively regulating NK-cell maturation and antitumor immunity. Mechanistically, suppresses IL-15-triggered mTOR activity in NK-cells. In Mus musculus (Mouse), this protein is Tumor necrosis factor alpha-induced protein 8-like protein 2 (Tnfaip8l2).